The chain runs to 343 residues: L-threonine 3-dehydrogenase (343 aa).

Zn(2+) is bound at residue cysteine 40. Catalysis depends on charge relay system residues threonine 42 and histidine 45. Positions 65, 66, 95, 98, 101, and 109 each coordinate Zn(2+). NAD(+)-binding positions include isoleucine 177, aspartate 197, arginine 202, 264 to 266 (LGI), and 288 to 289 (IY).

It belongs to the zinc-containing alcohol dehydrogenase family. Homotetramer. Requires Zn(2+) as cofactor.

It localises to the cytoplasm. It carries out the reaction L-threonine + NAD(+) = (2S)-2-amino-3-oxobutanoate + NADH + H(+). It functions in the pathway amino-acid degradation; L-threonine degradation via oxydo-reductase pathway; glycine from L-threonine: step 1/2. Functionally, catalyzes the NAD(+)-dependent oxidation of L-threonine to 2-amino-3-ketobutyrate. This chain is L-threonine 3-dehydrogenase, found in Vibrio atlanticus (strain LGP32) (Vibrio splendidus (strain Mel32)).